The chain runs to 50 residues: Mast cell degranulating peptide (50 aa).

An N-terminal signal peptide occupies residues 1 to 27 (MISMLRCTFFFVSVILITSYFVTPTMS). The residue at position 29 (Lys29) is an N6-formyllysine. Cys30 and Cys42 are joined by a disulfide. Residues Lys44 and Lys48 each carry the N6-formyllysine modification. Position 49 is an asparagine amide (Asn49).

As to expression, expressed by the venom gland.

It is found in the secreted. Potent anti-inflammatory agent. At low concentrations, mediates the degranulation of mast cells thus evoking an inflammatory response. Also acts as a neurotoxin capable of blocking a class of voltage-gated potassium channels. The sequence is that of Mast cell degranulating peptide from Apis cerana cerana (Oriental honeybee).